A 150-amino-acid chain; its full sequence is 6,7-dimethyl-8-ribityllumazine synthase (150 aa).

5-amino-6-(D-ribitylamino)uracil-binding positions include Phe-11, 43-45 (VFD), and 67-69 (AVI). 72–73 (AT) is a binding site for (2S)-2-hydroxy-3-oxobutyl phosphate. His-75 functions as the Proton donor in the catalytic mechanism. Leu-100 is a binding site for 5-amino-6-(D-ribitylamino)uracil. A (2S)-2-hydroxy-3-oxobutyl phosphate-binding site is contributed by Arg-115.

Belongs to the DMRL synthase family.

It catalyses the reaction (2S)-2-hydroxy-3-oxobutyl phosphate + 5-amino-6-(D-ribitylamino)uracil = 6,7-dimethyl-8-(1-D-ribityl)lumazine + phosphate + 2 H2O + H(+). It functions in the pathway cofactor biosynthesis; riboflavin biosynthesis; riboflavin from 2-hydroxy-3-oxobutyl phosphate and 5-amino-6-(D-ribitylamino)uracil: step 1/2. Functionally, catalyzes the formation of 6,7-dimethyl-8-ribityllumazine by condensation of 5-amino-6-(D-ribitylamino)uracil with 3,4-dihydroxy-2-butanone 4-phosphate. This is the penultimate step in the biosynthesis of riboflavin. This is 6,7-dimethyl-8-ribityllumazine synthase from Pyrobaculum calidifontis (strain DSM 21063 / JCM 11548 / VA1).